Here is a 218-residue protein sequence, read N- to C-terminus: Capsid protein (218 aa).

An N-acetylmethionine; by host modification is found at Met1. The tract at residues 1-28 (MDKSESTSAGRNRRRRPRRGSRSAPSSA) is disordered. A compositionally biased stretch (basic residues) spans 11-21 (RNRRRRPRRGS).

It belongs to the cucumovirus capsid protein family.

The protein resides in the virion. Capsid protein. Probably binds RNA and plays a role in packaging. The chain is Capsid protein from Cucumis sativus (Cucumber).